We begin with the raw amino-acid sequence, 274 residues long: 2,3,4,5-tetrahydropyridine-2,6-dicarboxylate N-succinyltransferase (274 aa).

2 residues coordinate substrate: Arg-104 and Asp-141.

Belongs to the transferase hexapeptide repeat family. As to quaternary structure, homotrimer.

Its subcellular location is the cytoplasm. It carries out the reaction (S)-2,3,4,5-tetrahydrodipicolinate + succinyl-CoA + H2O = (S)-2-succinylamino-6-oxoheptanedioate + CoA. Its pathway is amino-acid biosynthesis; L-lysine biosynthesis via DAP pathway; LL-2,6-diaminopimelate from (S)-tetrahydrodipicolinate (succinylase route): step 1/3. The sequence is that of 2,3,4,5-tetrahydropyridine-2,6-dicarboxylate N-succinyltransferase from Wigglesworthia glossinidia brevipalpis.